An 882-amino-acid polypeptide reads, in one-letter code: MPEIAQAHTPMMRQYLETKARYPDAILFFRLGDFYEMFFEDALTASEALQITLTARSKGDDKVPMCGVPYHAARGYVARLLEKGFKVAICDQVEEPGKSQLVKREVTRVVTPGMVLDDQVLDPREASWLGAVALDDGRAGLALLDASTGQLQCGEVDGDERLVDELRRAGVRELVFSSAADGARAEAIARAVGAPAARRDAAEFERAEDRLRKHLGVPSLDGFGVSGLPLGLAAAAAALAYLADTQRAAPRHVDRISRLSTDDVLLLDEATRTNLELERTLSGGRKKGTLLALLDRTVTAPGGRRLAEWLRYPLTDLARIGARLDAVEELTGAAVAREELALALRPVADLERLLSRLVLGQGNARDLRALAGALLALPALAAVLEARGAARLREAGARLRGLEALAAHLDAAVAEEPPATLREGGIIRRGHSAELDEIVAIAEDGKGWIAALEAKERERTGIGSLKVRFNKVFGYYLEVTRPNLHLVPKDWERRQTTVGGERFVTPELKTLEEKVLTAEERRAALEERLFEALRQAVAAEAPRVRTAADAVATADALLSLSRVAAERGYVRPEVDASEALEIVDGRHPVVEAVLPDGPAAYVPNDVLVASRDAPECAEHGALLVITGPNMAGKSTVMREAALVVLLAQMGAFVPARRARIGLVDRIFTRVGASDDLARGRSTFMVEMTETAAILHNATRRSLVVLDEIGRGTSTFDGVSIAWAVAEHLHDVTGCRTLFATHYHELQDLARERPAVRNLTVAVREVGDRVVFLRKLVQGGASRSYGIEVAKLAGLPAEVLARAREILKNLEAMEVDEGGHPALARGRRRRAGPSAAQLGLFGGGAAADPAAEEVAKAIRAIDLDALRPLDALNLLAGWKKSLE.

627-634 is a binding site for ATP; it reads GPNMAGKS.

It belongs to the DNA mismatch repair MutS family.

Its function is as follows. This protein is involved in the repair of mismatches in DNA. It is possible that it carries out the mismatch recognition step. This protein has a weak ATPase activity. The protein is DNA mismatch repair protein MutS of Anaeromyxobacter sp. (strain K).